Here is a 116-residue protein sequence, read N- to C-terminus: Large-conductance mechanosensitive channel (116 aa).

2 helical membrane passes run 7-27 and 64-84; these read EFALKGNVLDLAIAVVMGAAF and GLFIQSIIDFIIIAFALFIFV.

Belongs to the MscL family. In terms of assembly, homopentamer.

Its subcellular location is the cell membrane. Its function is as follows. Channel that opens in response to stretch forces in the membrane lipid bilayer. May participate in the regulation of osmotic pressure changes within the cell. The sequence is that of Large-conductance mechanosensitive channel from Staphylococcus epidermidis (strain ATCC 35984 / DSM 28319 / BCRC 17069 / CCUG 31568 / BM 3577 / RP62A).